Reading from the N-terminus, the 682-residue chain is Penicillin-binding protein activator LpoA (682 aa).

The N-terminal stretch at Met1–Ala26 is a signal peptide. Cys27 carries the N-palmitoyl cysteine lipid modification. Cys27 carries S-diacylglycerol cysteine lipidation.

It belongs to the LpoA family. In terms of assembly, interacts with PBP1a.

It is found in the cell outer membrane. In terms of biological role, regulator of peptidoglycan synthesis that is essential for the function of penicillin-binding protein 1A (PBP1a). The chain is Penicillin-binding protein activator LpoA from Edwardsiella ictaluri (strain 93-146).